The sequence spans 464 residues: ATP synthase subunit beta 2 (464 aa).

ATP is bound at residue 147–154; sequence GGAGVGKT.

Belongs to the ATPase alpha/beta chains family. In terms of assembly, F-type ATPases have 2 components, CF(1) - the catalytic core - and CF(0) - the membrane proton channel. CF(1) has five subunits: alpha(3), beta(3), gamma(1), delta(1), epsilon(1). CF(0) has four main subunits: a(1), b(1), b'(1) and c(9-12).

It localises to the cell inner membrane. The enzyme catalyses ATP + H2O + 4 H(+)(in) = ADP + phosphate + 5 H(+)(out). Its function is as follows. Produces ATP from ADP in the presence of a proton gradient across the membrane. The catalytic sites are hosted primarily by the beta subunits. The protein is ATP synthase subunit beta 2 of Cereibacter sphaeroides (strain ATCC 17023 / DSM 158 / JCM 6121 / CCUG 31486 / LMG 2827 / NBRC 12203 / NCIMB 8253 / ATH 2.4.1.) (Rhodobacter sphaeroides).